Here is a 340-residue protein sequence, read N- to C-terminus: Cell division protein FtsQ (340 aa).

Residues 1-41 (MQGLNPFHRDQGAGGRPAPVRPAPARPAPVAPRTPRKDPAP) form a disordered region. At 1–55 (MQGLNPFHRDQGAGGRPAPVRPAPARPAPVAPRTPRKDPAPSRLAYRLNRMMLRP) the chain is on the cytoplasmic side. Positions 19-32 (PVRPAPARPAPVAP) are enriched in pro residues. The helical transmembrane segment at 56–78 (LVRRLVHVGLPAFLAALVAGIWL) threads the bilayer. The Periplasmic portion of the chain corresponds to 79–340 (SDDTRRANLT…NAAKAKKKSG (262 aa)). The region spanning 104 to 172 (FMVKMMTIEG…GVLSAVVTER (69 aa)) is the POTRA domain. The interval 308–340 (RQARGQPELGPDGTPLAPEATAGNAAKAKKKSG) is disordered. Residues 324–333 (APEATAGNAA) are compositionally biased toward low complexity.

It belongs to the FtsQ/DivIB family. FtsQ subfamily.

The protein resides in the cell inner membrane. In terms of biological role, essential cell division protein. In Paracoccus denitrificans (strain Pd 1222), this protein is Cell division protein FtsQ.